Consider the following 476-residue polypeptide: MTTVAQKHFLEGQTYSVPLIQPDLRREEAVQQVADALQYLQKVSGDIFNRISQRVETSRAQLQAISERVTLAQAKIEKIKGSKKAIKVFSSAKYPAPERLQEYCSIFAGAEDPSKQKWPRHKIQSKHRMLDEKSLQEKLKYFPVCVNTKIHQEDDAEEGLGSLPRNISSLSSLLLFNTTENLYKKYVFLDPLAGAVTKTHVALETETEEKLFDAPLSITERGQLDRQVAENYFYVPDLGQVPEIDVPSYLPDLPGIAADLMYSADLGPGIAPSAPSSAIPELPTFSTESVEPSQADLQDPGLLPPPPPPPPPPPPVMPTTVPPPPPLPQPTAPSEPARTASEDSSKTVPAASVQGAPKEVVNPSTGRASLLESIRQAGGIGKANLRSVKERKLEKKKQKEQEQVRATGQGGDLMSDLFNKLVLRRKGISGKGPGASANPDAPGSPAGAFARMSDSIPPLPPPQQPPGEEDEDDWES.

Positions 1–54 (MTTVAQKHFLEGQTYSVPLIQPDLRREEAVQQVADALQYLQKVSGDIFNRISQR) are required for WASH complex assembly. Disordered regions lie at residues 273-412 (SAPS…QGGD) and 427-476 (GISG…DWES). A compositionally biased stretch (polar residues) spans 284–296 (TFSTESVEPSQAD). The segment covering 302-333 (LLPPPPPPPPPPPPVMPTTVPPPPPLPQPTAP) has biased composition (pro residues). Residues 354–476 (QGAPKEVVNP…GEEDEDDWES (123 aa)) are VCA. The WH2 domain occupies 366–388 (GRASLLESIRQAGGIGKANLRSV). Residues 387–403 (SVKERKLEKKKQKEQEQ) show a composition bias toward basic and acidic residues. Over residues 467–476 (GEEDEDDWES) the composition is skewed to acidic residues.

It belongs to the WASH1 family. As to quaternary structure, component of the WASH complex.

The protein resides in the early endosome membrane. The protein localises to the recycling endosome membrane. Acts as a nucleation-promoting factor at the surface of endosomes, where it recruits and activates the Arp2/3 complex to induce actin polymerization, playing a key role in the fission of tubules that serve as transport intermediates during endosome sorting. The protein is WASH complex subunit 1 of Gallus gallus (Chicken).